A 153-amino-acid polypeptide reads, in one-letter code: UPF0235 protein C15orf40 (153 aa).

Positions 1–12 are enriched in basic residues; that stretch reads MLRLRSGLRHLR. Residues 1-55 form a disordered region; it reads MLRLRSGLRHLRATPNTRGSARLLCAEMPKKAGATTKGKSQSKEPERPLPPLGPV. Serine 116 bears the Phosphoserine mark.

It belongs to the UPF0235 family.

The protein is UPF0235 protein C15orf40 (C15orf40) of Homo sapiens (Human).